The primary structure comprises 107 residues: Phosphoribosyl-ATP pyrophosphatase (107 aa).

It belongs to the PRA-PH family.

It localises to the cytoplasm. It carries out the reaction 1-(5-phospho-beta-D-ribosyl)-ATP + H2O = 1-(5-phospho-beta-D-ribosyl)-5'-AMP + diphosphate + H(+). The protein operates within amino-acid biosynthesis; L-histidine biosynthesis; L-histidine from 5-phospho-alpha-D-ribose 1-diphosphate: step 2/9. The polypeptide is Phosphoribosyl-ATP pyrophosphatase (Caulobacter sp. (strain K31)).